A 259-amino-acid polypeptide reads, in one-letter code: 7-cyano-7-deazaguanine synthase (259 aa).

Residue 32–42 (LSGGLDSVTCL) participates in ATP binding. 4 residues coordinate Zn(2+): Cys223, Cys233, Cys236, and Cys239.

This sequence belongs to the QueC family. The cofactor is Zn(2+).

It carries out the reaction 7-carboxy-7-deazaguanine + NH4(+) + ATP = 7-cyano-7-deazaguanine + ADP + phosphate + H2O + H(+). Its pathway is purine metabolism; 7-cyano-7-deazaguanine biosynthesis. Catalyzes the ATP-dependent conversion of 7-carboxy-7-deazaguanine (CDG) to 7-cyano-7-deazaguanine (preQ(0)). The protein is 7-cyano-7-deazaguanine synthase of Psychrobacter cryohalolentis (strain ATCC BAA-1226 / DSM 17306 / VKM B-2378 / K5).